A 1044-amino-acid chain; its full sequence is Isoleucine--tRNA ligase (1044 aa).

The 'HIGH' region motif lies at 48–58 (PFATGLPHFGH). The short motif at 594–598 (KMSKS) is the 'KMSKS' region element. Lysine 597 is an ATP binding site.

The protein belongs to the class-I aminoacyl-tRNA synthetase family. IleS type 2 subfamily. As to quaternary structure, monomer. Zn(2+) serves as cofactor.

It localises to the cytoplasm. The enzyme catalyses tRNA(Ile) + L-isoleucine + ATP = L-isoleucyl-tRNA(Ile) + AMP + diphosphate. Functionally, catalyzes the attachment of isoleucine to tRNA(Ile). As IleRS can inadvertently accommodate and process structurally similar amino acids such as valine, to avoid such errors it has two additional distinct tRNA(Ile)-dependent editing activities. One activity is designated as 'pretransfer' editing and involves the hydrolysis of activated Val-AMP. The other activity is designated 'posttransfer' editing and involves deacylation of mischarged Val-tRNA(Ile). This Borrelia turicatae (strain 91E135) protein is Isoleucine--tRNA ligase.